We begin with the raw amino-acid sequence, 239 residues long: Ribonuclease PH (239 aa).

Phosphate contacts are provided by residues arginine 88 and 126–128; that span reads GTR.

The protein belongs to the RNase PH family. Homohexameric ring arranged as a trimer of dimers.

The catalysed reaction is tRNA(n+1) + phosphate = tRNA(n) + a ribonucleoside 5'-diphosphate. Its function is as follows. Phosphorolytic 3'-5' exoribonuclease that plays an important role in tRNA 3'-end maturation. Removes nucleotide residues following the 3'-CCA terminus of tRNAs; can also add nucleotides to the ends of RNA molecules by using nucleoside diphosphates as substrates, but this may not be physiologically important. Probably plays a role in initiation of 16S rRNA degradation (leading to ribosome degradation) during starvation. The protein is Ribonuclease PH of Coxiella burnetii (strain Dugway 5J108-111).